The primary structure comprises 330 residues: Probable cell division protein WhiA (330 aa).

Residues 275 to 308 (SLDELGRLSDPPLTKDAIAGRIRRLLAMADRRAE) constitute a DNA-binding region (H-T-H motif).

Belongs to the WhiA family.

In terms of biological role, involved in cell division and chromosome segregation. The polypeptide is Probable cell division protein WhiA (Kocuria rhizophila (strain ATCC 9341 / DSM 348 / NBRC 103217 / DC2201)).